The chain runs to 361 residues: 3-dehydroquinate synthase (361 aa).

Residues asparagine 41, 70–75 (DGEQYK), 104–108 (GVIGD), 128–129 (TT), lysine 141, lysine 150, 150–151 (KN), and 168–171 (CLTT) contribute to the NAD(+) site. Glutamate 183, histidine 246, and histidine 263 together coordinate Zn(2+).

The protein belongs to the sugar phosphate cyclases superfamily. Dehydroquinate synthase family. Requires NAD(+) as cofactor. Co(2+) serves as cofactor. The cofactor is Zn(2+).

Its subcellular location is the cytoplasm. It catalyses the reaction 7-phospho-2-dehydro-3-deoxy-D-arabino-heptonate = 3-dehydroquinate + phosphate. It participates in metabolic intermediate biosynthesis; chorismate biosynthesis; chorismate from D-erythrose 4-phosphate and phosphoenolpyruvate: step 2/7. Its function is as follows. Catalyzes the conversion of 3-deoxy-D-arabino-heptulosonate 7-phosphate (DAHP) to dehydroquinate (DHQ). The protein is 3-dehydroquinate synthase of Vibrio cholerae serotype O1 (strain ATCC 39315 / El Tor Inaba N16961).